Here is a 270-residue protein sequence, read N- to C-terminus: Glucosamine-6-phosphate deaminase (270 aa).

Residue Asp-68 is the Proton acceptor; for enolization step of the active site. The active-site For ring-opening step is Asp-145. His-147 functions as the Proton acceptor; for ring-opening step in the catalytic mechanism. Catalysis depends on Glu-152, which acts as the For ring-opening step.

This sequence belongs to the glucosamine/galactosamine-6-phosphate isomerase family. NagB subfamily.

It catalyses the reaction alpha-D-glucosamine 6-phosphate + H2O = beta-D-fructose 6-phosphate + NH4(+). The protein operates within amino-sugar metabolism; N-acetylneuraminate degradation; D-fructose 6-phosphate from N-acetylneuraminate: step 5/5. In terms of biological role, catalyzes the reversible isomerization-deamination of glucosamine 6-phosphate (GlcN6P) to form fructose 6-phosphate (Fru6P) and ammonium ion. In Bifidobacterium longum subsp. infantis (strain ATCC 15697 / DSM 20088 / JCM 1222 / NCTC 11817 / S12), this protein is Glucosamine-6-phosphate deaminase.